Consider the following 81-residue polypeptide: Large ribosomal subunit protein bL27 (81 aa).

Positions 1 to 22 (MAHKKGQGSSRNGRDSNAQRRG) are disordered.

This sequence belongs to the bacterial ribosomal protein bL27 family.

This chain is Large ribosomal subunit protein bL27, found in Rhodopirellula baltica (strain DSM 10527 / NCIMB 13988 / SH1).